Reading from the N-terminus, the 40-residue chain is Natriuretic peptide PaNP-b (40 aa).

Cysteines 9 and 25 form a disulfide. A propeptide spanning residues 36 to 40 (IPGGS) is cleaved from the precursor.

It belongs to the natriuretic peptide family. In terms of tissue distribution, expressed by the venom gland.

The protein localises to the secreted. Functionally, snake venom natriuretic peptide that targets both NPR1 and NPR2. Exhibits hypotensive and vasodepressor activities. The chain is Natriuretic peptide PaNP-b from Pseudechis australis (Mulga snake).